The sequence spans 377 residues: UDP-N-acetylglucosamine--N-acetylmuramyl-(pentapeptide) pyrophosphoryl-undecaprenol N-acetylglucosamine transferase (377 aa).

UDP-N-acetyl-alpha-D-glucosamine-binding positions include 29-31 (TAG), N142, R179, S213, and Q308.

It belongs to the glycosyltransferase 28 family. MurG subfamily.

Its subcellular location is the cell membrane. It catalyses the reaction di-trans,octa-cis-undecaprenyl diphospho-N-acetyl-alpha-D-muramoyl-L-alanyl-D-glutamyl-meso-2,6-diaminopimeloyl-D-alanyl-D-alanine + UDP-N-acetyl-alpha-D-glucosamine = di-trans,octa-cis-undecaprenyl diphospho-[N-acetyl-alpha-D-glucosaminyl-(1-&gt;4)]-N-acetyl-alpha-D-muramoyl-L-alanyl-D-glutamyl-meso-2,6-diaminopimeloyl-D-alanyl-D-alanine + UDP + H(+). The protein operates within cell wall biogenesis; peptidoglycan biosynthesis. Cell wall formation. Catalyzes the transfer of a GlcNAc subunit on undecaprenyl-pyrophosphoryl-MurNAc-pentapeptide (lipid intermediate I) to form undecaprenyl-pyrophosphoryl-MurNAc-(pentapeptide)GlcNAc (lipid intermediate II). The sequence is that of UDP-N-acetylglucosamine--N-acetylmuramyl-(pentapeptide) pyrophosphoryl-undecaprenol N-acetylglucosamine transferase from Saccharopolyspora erythraea (strain ATCC 11635 / DSM 40517 / JCM 4748 / NBRC 13426 / NCIMB 8594 / NRRL 2338).